The primary structure comprises 180 residues: Shikimate kinase (180 aa).

Residue 15-20 (GAGKTT) participates in ATP binding. Thr19 provides a ligand contact to Mg(2+). Asp37, Arg61, and Gly83 together coordinate substrate. Arg121 contributes to the ATP binding site. Residue Arg140 participates in substrate binding.

The protein belongs to the shikimate kinase family. Monomer. It depends on Mg(2+) as a cofactor.

The protein localises to the cytoplasm. The enzyme catalyses shikimate + ATP = 3-phosphoshikimate + ADP + H(+). Its pathway is metabolic intermediate biosynthesis; chorismate biosynthesis; chorismate from D-erythrose 4-phosphate and phosphoenolpyruvate: step 5/7. Functionally, catalyzes the specific phosphorylation of the 3-hydroxyl group of shikimic acid using ATP as a cosubstrate. The chain is Shikimate kinase from Psychrobacter sp. (strain PRwf-1).